Consider the following 399-residue polypeptide: Secreted RxLR effector protein 36 (399 aa).

A signal peptide spans 1-21; that stretch reads MRGTIYVAIAILVAASSRSSA. The RxLR-dEER signature appears at 50–71; the sequence is RILRESRGSNDKLAVGAGDEER. A glycan (N-linked (GlcNAc...) asparagine) is linked at asparagine 75. Positions 126 to 145 are disordered; that stretch reads IDPTPSNLGGQALHAPPNPD.

This sequence belongs to the RxLR effector family.

The protein localises to the secreted. It is found in the host nucleus. Secreted effector that completely suppresses the host cell death induced by cell death-inducing proteins. This is Secreted RxLR effector protein 36 from Plasmopara viticola (Downy mildew of grapevine).